A 286-amino-acid polypeptide reads, in one-letter code: Meiotically up-regulated gene 64 protein (286 aa).

It is found in the cytoplasm. Has a role in meiosis. The protein is Meiotically up-regulated gene 64 protein (mug64) of Schizosaccharomyces pombe (strain 972 / ATCC 24843) (Fission yeast).